Consider the following 227-residue polypeptide: uncharacterized protein (227 aa).

This is an uncharacterized protein from Schizosaccharomyces pombe (strain 972 / ATCC 24843) (Fission yeast).